A 135-amino-acid chain; its full sequence is Large ribosomal subunit protein bL19 (135 aa).

This sequence belongs to the bacterial ribosomal protein bL19 family.

Functionally, this protein is located at the 30S-50S ribosomal subunit interface and may play a role in the structure and function of the aminoacyl-tRNA binding site. The protein is Large ribosomal subunit protein bL19 of Xanthomonas campestris pv. campestris (strain 8004).